A 94-amino-acid chain; its full sequence is Integration host factor subunit beta (94 aa).

It belongs to the bacterial histone-like protein family. As to quaternary structure, heterodimer of an alpha and a beta chain.

In terms of biological role, this protein is one of the two subunits of integration host factor, a specific DNA-binding protein that functions in genetic recombination as well as in transcriptional and translational control. This Azorhizobium caulinodans (strain ATCC 43989 / DSM 5975 / JCM 20966 / LMG 6465 / NBRC 14845 / NCIMB 13405 / ORS 571) protein is Integration host factor subunit beta.